The primary structure comprises 449 residues: Hyaluronidase-4 (449 aa).

The N-terminal stretch at 1–23 (MYHIWIKFLAAWIFLKRFNGVHV) is a signal peptide. 2 disulfide bridges follow: Cys47-Cys340 and Cys211-Cys227. 3 N-linked (GlcNAc...) asparagine glycosylation sites follow: Asn67, Asn103, and Asn111. Residue Glu135 is the Proton donor of the active site. The N-linked (GlcNAc...) asparagine glycan is linked to Asn153. Asn357 is a glycosylation site (N-linked (GlcNAc...) asparagine). 3 cysteine pairs are disulfide-bonded: Cys365–Cys376, Cys370–Cys427, and Cys429–Cys438. Asn401 is a glycosylation site (N-linked (GlcNAc...) asparagine). Positions 427–438 (CQCYQGWKGLYC) constitute an EGF-like domain.

Belongs to the glycosyl hydrolase 56 family. Monomer. In terms of tissue distribution, expressed by the venom gland.

The protein localises to the secreted. The catalysed reaction is Random hydrolysis of (1-&gt;4)-linkages between N-acetyl-beta-D-glucosamine and D-glucuronate residues in hyaluronate.. Its function is as follows. Snake venom endo-hyaluronidase that degrades hyaluronan to smaller oligosaccharide fragments. In venom, it is not toxic by itself, but increases the diffusion of other venom proteins by degrading the extracellular matrix. In addition, it displays antiedematogenic activity. This chain is Hyaluronidase-4, found in Cerastes cerastes (Horned desert viper).